The sequence spans 382 residues: tRNA-specific 2-thiouridylase MnmA (382 aa).

ATP-binding positions include 18–25 (AMSGGVDS) and Leu-44. Catalysis depends on Cys-112, which acts as the Nucleophile. The cysteines at positions 112 and 209 are disulfide-linked. Gly-136 is an ATP binding site. Residues 159–161 (RDQ) form an interaction with tRNA region. The active-site Cysteine persulfide intermediate is Cys-209.

It belongs to the MnmA/TRMU family.

It is found in the cytoplasm. It carries out the reaction S-sulfanyl-L-cysteinyl-[protein] + uridine(34) in tRNA + AH2 + ATP = 2-thiouridine(34) in tRNA + L-cysteinyl-[protein] + A + AMP + diphosphate + H(+). In terms of biological role, catalyzes the 2-thiolation of uridine at the wobble position (U34) of tRNA, leading to the formation of s(2)U34. This is tRNA-specific 2-thiouridylase MnmA from Methylobacterium nodulans (strain LMG 21967 / CNCM I-2342 / ORS 2060).